A 505-amino-acid chain; its full sequence is Maturase K (505 aa).

This sequence belongs to the intron maturase 2 family. MatK subfamily.

The protein resides in the plastid. It localises to the chloroplast. Its function is as follows. Usually encoded in the trnK tRNA gene intron. Probably assists in splicing its own and other chloroplast group II introns. This is Maturase K from Morus alba (White mulberry).